The sequence spans 543 residues: Cytochrome P450 1B1 (543 aa).

C470 is a binding site for heme.

It belongs to the cytochrome P450 family. Requires heme as cofactor. As to expression, constitutively expressed in retinal and kidney pericytes cells. Expressed in retinal endothelial cells (at protein level). Expressed in cardiac, pulmonary and aortic endothelial cells. Constitutively expressed in trabecular meshwork of the eye (at protein level).

The protein resides in the endoplasmic reticulum membrane. It is found in the microsome membrane. Its subcellular location is the mitochondrion. The catalysed reaction is an organic molecule + reduced [NADPH--hemoprotein reductase] + O2 = an alcohol + oxidized [NADPH--hemoprotein reductase] + H2O + H(+). The enzyme catalyses 17beta-estradiol + reduced [NADPH--hemoprotein reductase] + O2 = 2-hydroxy-17beta-estradiol + oxidized [NADPH--hemoprotein reductase] + H2O + H(+). It catalyses the reaction 17beta-estradiol + reduced [NADPH--hemoprotein reductase] + O2 = 4-hydroxy-17beta-estradiol + oxidized [NADPH--hemoprotein reductase] + H2O + H(+). It carries out the reaction estrone + reduced [NADPH--hemoprotein reductase] + O2 = 2-hydroxyestrone + oxidized [NADPH--hemoprotein reductase] + H2O + H(+). The catalysed reaction is estrone + reduced [NADPH--hemoprotein reductase] + O2 = 4-hydroxyestrone + oxidized [NADPH--hemoprotein reductase] + H2O + H(+). The enzyme catalyses testosterone + reduced [NADPH--hemoprotein reductase] + O2 = 6beta,17beta-dihydroxyandrost-4-en-3-one + oxidized [NADPH--hemoprotein reductase] + H2O + H(+). It catalyses the reaction progesterone + reduced [NADPH--hemoprotein reductase] + O2 = 6beta-hydroxyprogesterone + oxidized [NADPH--hemoprotein reductase] + H2O + H(+). It carries out the reaction progesterone + reduced [NADPH--hemoprotein reductase] + O2 = 16alpha-hydroxyprogesterone + oxidized [NADPH--hemoprotein reductase] + H2O + H(+). The catalysed reaction is all-trans-retinol + reduced [NADPH--hemoprotein reductase] + O2 = all-trans-retinal + oxidized [NADPH--hemoprotein reductase] + 2 H2O + H(+). The enzyme catalyses all-trans-retinal + reduced [NADPH--hemoprotein reductase] + O2 = all-trans-retinoate + oxidized [NADPH--hemoprotein reductase] + H2O + 2 H(+). It catalyses the reaction (5Z,8Z,11Z,14Z)-eicosatetraenoate + reduced [NADPH--hemoprotein reductase] + O2 = (8R,9S)-epoxy-(5Z,11Z,14Z)-eicosatrienoate + oxidized [NADPH--hemoprotein reductase] + H2O + H(+). It carries out the reaction (5Z,8Z,11Z,14Z)-eicosatetraenoate + reduced [NADPH--hemoprotein reductase] + O2 = (11R,12S)-epoxy-(5Z,8Z,14Z)-eicosatrienoate + oxidized [NADPH--hemoprotein reductase] + H2O + H(+). The catalysed reaction is (5Z,8Z,11Z,14Z)-eicosatetraenoate + reduced [NADPH--hemoprotein reductase] + O2 = (11S,12R)-epoxy-(5Z,8Z,14Z)-eicosatrienoate + oxidized [NADPH--hemoprotein reductase] + H2O + H(+). The enzyme catalyses (5Z,8Z,11Z,14Z)-eicosatetraenoate + reduced [NADPH--hemoprotein reductase] + O2 = (14R,15S)-epoxy-(5Z,8Z,11Z)-eicosatrienoate + oxidized [NADPH--hemoprotein reductase] + H2O + H(+). It catalyses the reaction (5S)-hydroperoxy-(6E,8Z,11Z,14Z)-eicosatetraenoate = 5-oxo-(6E,8Z,11Z,14Z)-eicosatetraenoate + H2O. It carries out the reaction (12S)-hydroperoxy-(5Z,8Z,10E,14Z)-eicosatetraenoate = 12-oxo-(5Z,8Z,10E,14Z)-eicosatetraenoate + H2O. The catalysed reaction is (13S)-hydroperoxy-(9Z,11E)-octadecadienoate = 13-oxo-(9Z,11E)-octadecadienoate + H2O. The enzyme catalyses (15S)-hydroperoxy-(5Z,8Z,11Z,13E)-eicosatetraenoate = 15-oxo-(5Z,8Z,11Z,13E)-eicosatetraenoate + H2O. The protein operates within steroid hormone biosynthesis. It participates in cofactor metabolism; retinol metabolism. Its pathway is lipid metabolism; arachidonate metabolism. Its activity is regulated as follows. Enzyme activity is increased by cytochrome b5. Enzyme activity is increased by liposomes containing anionic phospholipids, phosphatidic acid and cardiolipin. Inhibited by naringenin with an IC(50) of 5 uM. Its function is as follows. A cytochrome P450 monooxygenase involved in the metabolism of various endogenous substrates, including fatty acids, steroid hormones and vitamins. Mechanistically, uses molecular oxygen inserting one oxygen atom into a substrate, and reducing the second into a water molecule, with two electrons provided by NADPH via cytochrome P450 reductase (NADPH--hemoprotein reductase). Exhibits catalytic activity for the formation of hydroxyestrogens from 17beta-estradiol (E2), namely 2- and 4-hydroxy E2. Metabolizes testosterone and progesterone to B or D ring hydroxylated metabolites. May act as a major enzyme for all-trans retinoic acid biosynthesis in extrahepatic tissues. Catalyzes two successive oxidative transformation of all-trans retinol to all-trans retinal and then to the active form all-trans retinoic acid. Catalyzes the epoxidation of double bonds of certain PUFA. Converts arachidonic acid toward epoxyeicosatrienoic acid (EpETrE) regioisomers, 8,9-, 11,12-, and 14,15- EpETrE, that function as lipid mediators in the vascular system. Additionally, displays dehydratase activity toward oxygenated eicosanoids hydroperoxyeicosatetraenoates (HpETEs). This activity is independent of cytochrome P450 reductase, NADPH, and O2. Also involved in the oxidative metabolism of xenobiotics, particularly converting polycyclic aromatic hydrocarbons and heterocyclic aryl amines procarcinogens to DNA-damaging products. Plays an important role in retinal vascular development. Under ambient/hyperoxic O2 conditions, promotes angiogenesis and capillary morphogenesis of retinal endothelial cells and pericytes, likely by metabolizing the oxygenated products symptomatic of oxidative stress. Also, contributes to oxidative homeostasis and ultrastructural organization and function of trabecular meshwork tissue through modulation of POSTN expression. The protein is Cytochrome P450 1B1 of Mus musculus (Mouse).